Reading from the N-terminus, the 333-residue chain is L-lactate dehydrogenase B chain (333 aa).

Residues 29–57 and Arg99 contribute to the NAD(+) site; that span reads GQVG…LEDK. Positions 106, 138, and 169 each coordinate substrate. Residue Asn138 coordinates NAD(+). His193 (proton acceptor) is an active-site residue. Thr248 lines the substrate pocket.

Belongs to the LDH/MDH superfamily. LDH family. Homotetramer.

It is found in the cytoplasm. It catalyses the reaction (S)-lactate + NAD(+) = pyruvate + NADH + H(+). It functions in the pathway fermentation; pyruvate fermentation to lactate; (S)-lactate from pyruvate: step 1/1. Its function is as follows. Interconverts simultaneously and stereospecifically pyruvate and lactate with concomitant interconversion of NADH and NAD(+). This is L-lactate dehydrogenase B chain (LDHB) from Caiman crocodilus apaporiensis (Rio Apaporis caiman).